The chain runs to 864 residues: Leucine--tRNA ligase (864 aa).

Residues 42-52 carry the 'HIGH' region motif; it reads PYPSGKLHMGH. The 'KMSKS' region motif lies at 624-628; it reads KMSKS. Lysine 627 is a binding site for ATP.

The protein belongs to the class-I aminoacyl-tRNA synthetase family.

It localises to the cytoplasm. The catalysed reaction is tRNA(Leu) + L-leucine + ATP = L-leucyl-tRNA(Leu) + AMP + diphosphate. This chain is Leucine--tRNA ligase, found in Burkholderia mallei (strain ATCC 23344).